A 502-amino-acid polypeptide reads, in one-letter code: Mannitol 2-dehydrogenase (502 aa).

37-48 serves as a coordination point for NAD(+); sequence IVHIGVGGFHRA.

This sequence belongs to the mannitol dehydrogenase family. As to quaternary structure, monomer.

It carries out the reaction D-mannitol + NAD(+) = D-fructose + NADH + H(+). In terms of biological role, catalyzes the NAD(H)-dependent interconversion of D-fructose and D-mannitol in the mannitol metabolic pathway. This is Mannitol 2-dehydrogenase from Emericella nidulans (strain FGSC A4 / ATCC 38163 / CBS 112.46 / NRRL 194 / M139) (Aspergillus nidulans).